The primary structure comprises 230 residues: Ribonuclease 1 (230 aa).

The signal sequence occupies residues 1–22; the sequence is MKILLASLCLISLLVILPSVFS. Gln38 serves as a coordination point for RNA. Cys44 and Cys50 form a disulfide bridge. RNA-binding positions include His65, Phe115, 118–119, and 122–123; these read HE and KH. The active-site Proton donor is the His65. Intrachain disulfides connect Cys80–Cys126, Cys186–Cys221, and Cys202–Cys213. Glu119 is an active-site residue. Residue His123 is the Proton acceptor of the active site.

Belongs to the RNase T2 family.

The enzyme catalyses a ribonucleotidyl-ribonucleotide-RNA + H2O = a 3'-end 3'-phospho-ribonucleotide-RNA + a 5'-end dephospho-ribonucleoside-RNA + H(+). May remobilize phosphate, particularly when cells senesce or when phosphate becomes limiting. This is Ribonuclease 1 (RNS1) from Arabidopsis thaliana (Mouse-ear cress).